Here is a 159-residue protein sequence, read N- to C-terminus: Serine-protein kinase RsbW (159 aa).

Belongs to the anti-sigma-factor family.

The enzyme catalyses L-seryl-[protein] + ATP = O-phospho-L-seryl-[protein] + ADP + H(+). The catalysed reaction is L-threonyl-[protein] + ATP = O-phospho-L-threonyl-[protein] + ADP + H(+). Its function is as follows. Negative regulator of sigma-B activity. Phosphorylates and inactivates its specific antagonist protein, RsbV. Upon phosphorylation of RsbV, RsbW is released and binds to sigma-B, thereby blocking its ability to form an RNA polymerase holoenzyme (E-sigma-B). The sequence is that of Serine-protein kinase RsbW from Staphylococcus aureus (strain Newman).